Reading from the N-terminus, the 121-residue chain is Small ribosomal subunit protein bS16 (121 aa).

Residues 97–114 (LAKAKTKDGDNDSSKAES) are compositionally biased toward basic and acidic residues. The segment at 97 to 121 (LAKAKTKDGDNDSSKAESESNEAET) is disordered.

The protein belongs to the bacterial ribosomal protein bS16 family.

The sequence is that of Small ribosomal subunit protein bS16 from Prochlorococcus marinus (strain MIT 9301).